Here is a 130-residue protein sequence, read N- to C-terminus: Small ribosomal subunit protein uS11c (130 aa).

This sequence belongs to the universal ribosomal protein uS11 family. Part of the 30S ribosomal subunit.

Its subcellular location is the plastid. The protein localises to the chloroplast. The polypeptide is Small ribosomal subunit protein uS11c (Tupiella akineta (Green alga)).